We begin with the raw amino-acid sequence, 315 residues long: Protein FRA10AC1 homolog (315 aa).

M1 carries the post-translational modification N-acetylmethionine. The interval 1-28 (MHGHGGYDSDFSDDEQGGGSSKKRKKTV) is disordered. Residues S9 and S12 each carry the phosphoserine modification. K36 bears the N6-acetyllysine mark. Over residues 225 to 235 (KEIKSTKKRSK) the composition is skewed to basic residues. The tract at residues 225–308 (KEIKSTKKRS…EKSQEEEFDD (84 aa)) is disordered. The segment covering 236-245 (TKTESDESPH) has biased composition (basic and acidic residues). A phosphoserine mark is found at S251 and S252. The segment covering 257–279 (SQGKDEGHSSSKRSEDSRNRNAG) has biased composition (basic and acidic residues). 2 positions are modified to phosphoserine: S283 and S285.

Interacts with ESS2.

Its subcellular location is the nucleus. May be involved in pre-mRNA splicing. In Rattus norvegicus (Rat), this protein is Protein FRA10AC1 homolog (Fra10ac1).